The sequence spans 486 residues: Ribulose bisphosphate carboxylase large chain (486 aa).

N126 and T176 together coordinate substrate. K178 serves as the catalytic Proton acceptor. Position 180 (K180) interacts with substrate. Residues K204, D206, and E207 each coordinate Mg(2+). K204 is modified (N6-carboxylysine). The active-site Proton acceptor is the H296. R297, H329, and S381 together coordinate substrate.

It belongs to the RuBisCO large chain family. Type I subfamily. As to quaternary structure, heterohexadecamer of 8 large chains and 8 small chains. It depends on Mg(2+) as a cofactor.

The enzyme catalyses 2 (2R)-3-phosphoglycerate + 2 H(+) = D-ribulose 1,5-bisphosphate + CO2 + H2O. The catalysed reaction is D-ribulose 1,5-bisphosphate + O2 = 2-phosphoglycolate + (2R)-3-phosphoglycerate + 2 H(+). Its function is as follows. RuBisCO catalyzes two reactions: the carboxylation of D-ribulose 1,5-bisphosphate, the primary event in carbon dioxide fixation, as well as the oxidative fragmentation of the pentose substrate. Both reactions occur simultaneously and in competition at the same active site. The polypeptide is Ribulose bisphosphate carboxylase large chain (Sinorhizobium medicae (strain WSM419) (Ensifer medicae)).